A 130-amino-acid chain; its full sequence is Protein ApaG (130 aa).

Residues 3-127 (RALTKDIEVV…FSLDSPGLLR (125 aa)) form the ApaG domain.

The polypeptide is Protein ApaG (Rhizobium leguminosarum bv. trifolii (strain WSM2304)).